The primary structure comprises 369 residues: Anthranilate phosphoribosyltransferase (369 aa).

Residues Gly-111, Gly-114–Asp-115, Thr-119, Asn-121–Thr-124, Lys-139–Ser-147, and Ser-151 contribute to the 5-phospho-alpha-D-ribose 1-diphosphate site. Gly-111 serves as a coordination point for anthranilate. Ser-123 lines the Mg(2+) pocket. Asn-142 lines the anthranilate pocket. Arg-197 provides a ligand contact to anthranilate. Asp-256 and Glu-257 together coordinate Mg(2+).

Belongs to the anthranilate phosphoribosyltransferase family. As to quaternary structure, homodimer. Mg(2+) serves as cofactor.

The catalysed reaction is N-(5-phospho-beta-D-ribosyl)anthranilate + diphosphate = 5-phospho-alpha-D-ribose 1-diphosphate + anthranilate. The protein operates within amino-acid biosynthesis; L-tryptophan biosynthesis; L-tryptophan from chorismate: step 2/5. Functionally, catalyzes the transfer of the phosphoribosyl group of 5-phosphorylribose-1-pyrophosphate (PRPP) to anthranilate to yield N-(5'-phosphoribosyl)-anthranilate (PRA). This Cupriavidus pinatubonensis (strain JMP 134 / LMG 1197) (Cupriavidus necator (strain JMP 134)) protein is Anthranilate phosphoribosyltransferase.